A 731-amino-acid chain; its full sequence is Catalase-peroxidase (731 aa).

Residues 1 to 24 (MSTEPNCPFSGNARKHTAAGAPSN) form a disordered region. Residues 96–219 (WHSAGTYRVS…LGAVQMGLIY (124 aa)) constitute a cross-link (tryptophyl-tyrosyl-methioninium (Trp-Tyr) (with M-245)). Catalysis depends on His-97, which acts as the Proton acceptor. Residues 219-245 (YVNPEGPNGNPDPIAAARDIRETFARM) constitute a cross-link (tryptophyl-tyrosyl-methioninium (Tyr-Met) (with W-96)). A heme b-binding site is contributed by His-260. The tract at residues 339–365 (GAQQWKPKGDAGAGTVPDAHDPSKRHA) is disordered.

The protein belongs to the peroxidase family. Peroxidase/catalase subfamily. As to quaternary structure, homodimer or homotetramer. The cofactor is heme b. Post-translationally, formation of the three residue Trp-Tyr-Met cross-link is important for the catalase, but not the peroxidase activity of the enzyme.

The enzyme catalyses H2O2 + AH2 = A + 2 H2O. It carries out the reaction 2 H2O2 = O2 + 2 H2O. Its function is as follows. Bifunctional enzyme with both catalase and broad-spectrum peroxidase activity. The chain is Catalase-peroxidase from Polaromonas sp. (strain JS666 / ATCC BAA-500).